The primary structure comprises 295 residues: Bifunctional protein FolD (295 aa).

NADP(+) is bound by residues 166-168 (GRS), S195, and I236.

This sequence belongs to the tetrahydrofolate dehydrogenase/cyclohydrolase family. As to quaternary structure, homodimer.

The catalysed reaction is (6R)-5,10-methylene-5,6,7,8-tetrahydrofolate + NADP(+) = (6R)-5,10-methenyltetrahydrofolate + NADPH. The enzyme catalyses (6R)-5,10-methenyltetrahydrofolate + H2O = (6R)-10-formyltetrahydrofolate + H(+). The protein operates within one-carbon metabolism; tetrahydrofolate interconversion. Catalyzes the oxidation of 5,10-methylenetetrahydrofolate to 5,10-methenyltetrahydrofolate and then the hydrolysis of 5,10-methenyltetrahydrofolate to 10-formyltetrahydrofolate. The protein is Bifunctional protein FolD of Chlorobium chlorochromatii (strain CaD3).